The following is a 448-amino-acid chain: MREVISVNAVGQAGCQIGNACWELYSLEHGIRPDGYLQEGLTKPKGGEEGFSTFFNETGSGKFVPRAVYVDLEPNVIDEVRTGAYRELFHPEQLISGKEDAANNYARGHYTVGRELLDDILDRIRKISDQCDGLQGFLFTHSLGGGTGSGLGSLLLEQLSIDYGKKSKLEFAVYPAPQVSTSVVEPYNTVLTTHTTLEHADCTFMVDNEAIYEMCKKNLDISRPSFANLNNLIAQVVSSVTASLRFDGSLNVDLNEFQTNLVPYPRIHFPLVSYAPILSKSKAHHESNSVGEITNACFEPGNQMVKCDPRVGKYMATCLLYRGDVVTRDVQTAVAQVKNKKTVQLVDWCPTGFKIGICYEPPTATPNSQLSSVSRAVCMLSNTTAIADAWKRIDRKFDLMYAKRAFVHWYVGEGMEEGEFTEAREDLAALERDYIEVGADSYADEEEF.

GTP-binding residues include Q12, E73, S142, G146, T147, T181, N208, and N230. Residue E73 participates in Mg(2+) binding. The active site involves E256.

Belongs to the tubulin family. In terms of assembly, dimer of alpha and beta chains. A typical microtubule is a hollow water-filled tube with an outer diameter of 25 nm and an inner diameter of 15 nM. Alpha-beta heterodimers associate head-to-tail to form protofilaments running lengthwise along the microtubule wall with the beta-tubulin subunit facing the microtubule plus end conferring a structural polarity. Microtubules usually have 13 protofilaments but different protofilament numbers can be found in some organisms and specialized cells. Mg(2+) is required as a cofactor.

The protein localises to the cytoplasm. It is found in the cytoskeleton. The enzyme catalyses GTP + H2O = GDP + phosphate + H(+). Its function is as follows. Tubulin is the major constituent of microtubules, a cylinder consisting of laterally associated linear protofilaments composed of alpha- and beta-tubulin heterodimers. Microtubules grow by the addition of GTP-tubulin dimers to the microtubule end, where a stabilizing cap forms. Below the cap, tubulin dimers are in GDP-bound state, owing to GTPase activity of alpha-tubulin. The protein is Tubulin alpha chain (TUB1) of Eremothecium gossypii (strain ATCC 10895 / CBS 109.51 / FGSC 9923 / NRRL Y-1056) (Yeast).